We begin with the raw amino-acid sequence, 346 residues long: uncharacterized protein (346 aa).

A helical transmembrane segment spans residues 7–27 (AMVILLIICGTYVLFIQYGSV). The disordered stretch occupies residues 29-48 (EKKSNDSEPQVSNEEAQSGK). Polar residues predominate over residues 35-44 (SEPQVSNEEA). The 112-residue stretch at 231 to 342 (LDLTNVIRVK…VDRKYYTQNF (112 aa)) folds into the SCP domain.

It localises to the cell membrane. This is an uncharacterized protein from Bacillus subtilis (strain 168).